Consider the following 264-residue polypeptide: S-adenosylmethionine decarboxylase proenzyme (264 aa).

Residue Ser113 is the Schiff-base intermediate with substrate; via pyruvic acid of the active site. The residue at position 113 (Ser113) is a Pyruvic acid (Ser); by autocatalysis. His118 acts as the Proton acceptor; for processing activity in catalysis. Cys141 acts as the Proton donor; for catalytic activity in catalysis.

The protein belongs to the prokaryotic AdoMetDC family. Type 2 subfamily. Heterooctamer of four alpha and four beta chains arranged as a tetramer of alpha/beta heterodimers. Requires pyruvate as cofactor. Is synthesized initially as an inactive proenzyme. Formation of the active enzyme involves a self-maturation process in which the active site pyruvoyl group is generated from an internal serine residue via an autocatalytic post-translational modification. Two non-identical subunits are generated from the proenzyme in this reaction, and the pyruvate is formed at the N-terminus of the alpha chain, which is derived from the carboxyl end of the proenzyme. The post-translation cleavage follows an unusual pathway, termed non-hydrolytic serinolysis, in which the side chain hydroxyl group of the serine supplies its oxygen atom to form the C-terminus of the beta chain, while the remainder of the serine residue undergoes an oxidative deamination to produce ammonia and the pyruvoyl group blocking the N-terminus of the alpha chain.

The enzyme catalyses S-adenosyl-L-methionine + H(+) = S-adenosyl 3-(methylsulfanyl)propylamine + CO2. It functions in the pathway amine and polyamine biosynthesis; S-adenosylmethioninamine biosynthesis; S-adenosylmethioninamine from S-adenosyl-L-methionine: step 1/1. Its function is as follows. Catalyzes the decarboxylation of S-adenosylmethionine to S-adenosylmethioninamine (dcAdoMet), the propylamine donor required for the synthesis of the polyamines spermine and spermidine from the diamine putrescine. This is S-adenosylmethionine decarboxylase proenzyme from Stenotrophomonas maltophilia (strain K279a).